The following is a 459-amino-acid chain: Cysteine--tRNA ligase (459 aa).

Cys29 lines the Zn(2+) pocket. A 'HIGH' region motif is present at residues 31–41 (PTVYDRAHIGN). Residues Cys209, His234, and Glu238 each coordinate Zn(2+). The 'KMSKS' region signature appears at 267–271 (KMSKS). An ATP-binding site is contributed by Lys270.

It belongs to the class-I aminoacyl-tRNA synthetase family. In terms of assembly, monomer. Zn(2+) is required as a cofactor.

The protein localises to the cytoplasm. It catalyses the reaction tRNA(Cys) + L-cysteine + ATP = L-cysteinyl-tRNA(Cys) + AMP + diphosphate. The protein is Cysteine--tRNA ligase of Rhodospirillum rubrum (strain ATCC 11170 / ATH 1.1.1 / DSM 467 / LMG 4362 / NCIMB 8255 / S1).